We begin with the raw amino-acid sequence, 30 residues long: Cyclotide mden-I (30 aa).

Residues 1-30 (GIPCGESCVYIPCITTAIGCSCKNKVCYRN) constitute a cross-link (cyclopeptide (Gly-Asn)). 3 disulfides stabilise this stretch: cysteine 4–cysteine 20, cysteine 8–cysteine 22, and cysteine 13–cysteine 27.

The protein belongs to the cyclotide family. Bracelet subfamily. In terms of processing, this is a cyclic peptide.

In terms of biological role, probably participates in a plant defense mechanism. In Melicytus dentatus (Tree violet), this protein is Cyclotide mden-I.